A 315-amino-acid polypeptide reads, in one-letter code: tRNA pseudouridine synthase B (315 aa).

His-42 lines the substrate pocket. Asp-47 serves as the catalytic Nucleophile. Positions 75, 178, and 199 each coordinate substrate.

It belongs to the pseudouridine synthase TruB family. Type 1 subfamily.

It carries out the reaction uridine(55) in tRNA = pseudouridine(55) in tRNA. Its function is as follows. Responsible for synthesis of pseudouridine from uracil-55 in the psi GC loop of transfer RNAs. The protein is tRNA pseudouridine synthase B of Photorhabdus laumondii subsp. laumondii (strain DSM 15139 / CIP 105565 / TT01) (Photorhabdus luminescens subsp. laumondii).